The chain runs to 342 residues: Glycerol-3-phosphate dehydrogenase [NAD(P)+] (342 aa).

3 residues coordinate NADPH: serine 13, tryptophan 14, and lysine 108. Residues lysine 108, glycine 139, and serine 141 each coordinate sn-glycerol 3-phosphate. Alanine 143 serves as a coordination point for NADPH. Sn-glycerol 3-phosphate contacts are provided by lysine 194, aspartate 247, serine 257, arginine 258, and asparagine 259. Lysine 194 serves as the catalytic Proton acceptor. Arginine 258 provides a ligand contact to NADPH. The NADPH site is built by valine 282 and glutamate 284.

It belongs to the NAD-dependent glycerol-3-phosphate dehydrogenase family.

It localises to the cytoplasm. It catalyses the reaction sn-glycerol 3-phosphate + NAD(+) = dihydroxyacetone phosphate + NADH + H(+). The catalysed reaction is sn-glycerol 3-phosphate + NADP(+) = dihydroxyacetone phosphate + NADPH + H(+). It functions in the pathway membrane lipid metabolism; glycerophospholipid metabolism. Catalyzes the reduction of the glycolytic intermediate dihydroxyacetone phosphate (DHAP) to sn-glycerol 3-phosphate (G3P), the key precursor for phospholipid synthesis. This chain is Glycerol-3-phosphate dehydrogenase [NAD(P)+], found in Lactococcus lactis subsp. cremoris (strain SK11).